Reading from the N-terminus, the 611-residue chain is uncharacterized protein (611 aa).

This sequence belongs to the metallo-dependent hydrolases superfamily. N-acyl-D-amino-acid deacylase family.

This is an uncharacterized protein from Mycobacterium bovis (strain ATCC BAA-935 / AF2122/97).